Reading from the N-terminus, the 629-residue chain is Iron-regulated surface determinant protein B (629 aa).

Positions 1–40 (MNKQQKEFKSFYSIRKSSLGVASVAISTLLLLMSNGEAQA) are cleaved as a signal peptide. Positions 12–23 (YSIRKSSLGVAS) match the YSIRK-G/S signaling motif motif. Positions 38–104 (AQAAEETGGT…VKPAAKSDNN (67 aa)) are disordered. A compositionally biased stretch (basic and acidic residues) spans 83-99 (KEVEAPTSETKEVKPAA). NEAT domains follow at residues 128-253 (SAPN…KFKT) and 325-442 (KMTD…TKAN). Residues Met-346 and Tyr-424 each coordinate heme. 2 stretches are compositionally biased toward basic and acidic residues: residues 443–460 (ADKT…KKET) and 473–518 (VEKE…KGEV). The disordered stretch occupies residues 443 to 605 (ADKTNKKEQQ…QTGEESNKDM (163 aa)). The segment covering 519–532 (ESSSTTPTKVVSTT) has biased composition (low complexity). Composition is skewed to polar residues over residues 533–556 (QNAA…SAGS) and 569–599 (NIKN…QTGE). Residues 594 to 598 (LPQTG) carry the LPXTG sorting signal motif. Thr-597 bears the Pentaglycyl murein peptidoglycan amidated threonine mark. The propeptide at 598-629 (GEESNKDMTLPLMSLLALSSIIAFVLPRKRKN) is removed by sortase A.

The protein belongs to the IsdB family. As to quaternary structure, interacts with host HBA; this interaction allows heme extraction as iron source. Interacts with IsdA.

It is found in the secreted. The protein resides in the cell wall. In terms of biological role, cell wall-anchored surface receptor that extracts heme from oxidized metHb to enable growth on hemoglobin as a sole iron source. Rapidly extracts heme from hemoglobin and transfers it to IsdA or IsdC, which then relays it to the membrane transporter/IsdEF for internalization. Also promotes resistance to hydrogen peroxide and killing by neutrophils. This Staphylococcus aureus (strain bovine RF122 / ET3-1) protein is Iron-regulated surface determinant protein B (isdB).